The sequence spans 448 residues: ATP-dependent protease ATPase subunit HslU (448 aa).

Residues I18, 60-65, D261, E326, and R398 contribute to the ATP site; that span reads GVGKTE.

It belongs to the ClpX chaperone family. HslU subfamily. A double ring-shaped homohexamer of HslV is capped on each side by a ring-shaped HslU homohexamer. The assembly of the HslU/HslV complex is dependent on binding of ATP.

Its subcellular location is the cytoplasm. Functionally, ATPase subunit of a proteasome-like degradation complex; this subunit has chaperone activity. The binding of ATP and its subsequent hydrolysis by HslU are essential for unfolding of protein substrates subsequently hydrolyzed by HslV. HslU recognizes the N-terminal part of its protein substrates and unfolds these before they are guided to HslV for hydrolysis. This chain is ATP-dependent protease ATPase subunit HslU, found in Paraburkholderia xenovorans (strain LB400).